Reading from the N-terminus, the 204-residue chain is Protein OPG030 (204 aa).

One can recognise a BACK domain in the interval 95-177; it reads FLRQYINNNI…ITYSELTNAI (83 aa).

The protein belongs to the orthopoxvirus OPG030 family.

The chain is Protein OPG030 (OPG30) from Bos taurus (Bovine).